A 256-amino-acid chain; its full sequence is Dihydroorotate dehydrogenase B (NAD(+)), electron transfer subunit (256 aa).

Residues 1–101 form the FAD-binding FR-type domain; it reads MKKAHLTVQS…LGPLGNGFPV (101 aa). FAD contacts are provided by residues 52–55, 69–71, and 76–77; these read RPLS, IYR, and GT. Residues cysteine 220, cysteine 225, cysteine 228, and cysteine 243 each contribute to the [2Fe-2S] cluster site.

The protein belongs to the PyrK family. As to quaternary structure, heterotetramer of 2 PyrK and 2 PyrD type B subunits. It depends on [2Fe-2S] cluster as a cofactor. FAD is required as a cofactor.

Its pathway is pyrimidine metabolism; UMP biosynthesis via de novo pathway; orotate from (S)-dihydroorotate (NAD(+) route): step 1/1. In terms of biological role, responsible for channeling the electrons from the oxidation of dihydroorotate from the FMN redox center in the PyrD type B subunit to the ultimate electron acceptor NAD(+). The sequence is that of Dihydroorotate dehydrogenase B (NAD(+)), electron transfer subunit from Bacillus velezensis (strain DSM 23117 / BGSC 10A6 / LMG 26770 / FZB42) (Bacillus amyloliquefaciens subsp. plantarum).